We begin with the raw amino-acid sequence, 463 residues long: 23S rRNA (uracil(1939)-C(5))-methyltransferase RlmD (463 aa).

Positions 14–78 (AVAPGSDPVV…PSYEQAHLLE (65 aa)) constitute a TRAM domain. 4 residues coordinate [4Fe-4S] cluster: cysteine 91, cysteine 97, cysteine 100, and cysteine 179. The S-adenosyl-L-methionine site is built by glutamine 287, phenylalanine 316, asparagine 321, glutamate 337, asparagine 365, and aspartate 386. The active-site Nucleophile is cysteine 419.

Belongs to the class I-like SAM-binding methyltransferase superfamily. RNA M5U methyltransferase family. RlmD subfamily.

The catalysed reaction is uridine(1939) in 23S rRNA + S-adenosyl-L-methionine = 5-methyluridine(1939) in 23S rRNA + S-adenosyl-L-homocysteine + H(+). Catalyzes the formation of 5-methyl-uridine at position 1939 (m5U1939) in 23S rRNA. The polypeptide is 23S rRNA (uracil(1939)-C(5))-methyltransferase RlmD (Cupriavidus pinatubonensis (strain JMP 134 / LMG 1197) (Cupriavidus necator (strain JMP 134))).